Here is a 363-residue protein sequence, read N- to C-terminus: Caffeic acid 3-O-methyltransferase (363 aa).

130–136 contributes to the substrate binding site; sequence MNQDKVL. The interval 162–180 is substrate binding; the sequence is AFEYHGKDPRFNKVFNQGM. 5 residues coordinate S-adenosyl-L-methionine: Gly-208, Asp-231, Asp-251, Met-252, and Lys-265. The active-site Proton acceptor is the His-269.

This sequence belongs to the class I-like SAM-binding methyltransferase superfamily. Cation-independent O-methyltransferase family. COMT subfamily. Homodimer.

It carries out the reaction (E)-caffeate + S-adenosyl-L-methionine = (E)-ferulate + S-adenosyl-L-homocysteine + H(+). It participates in aromatic compound metabolism; phenylpropanoid biosynthesis. Functionally, catalyzes the conversion of caffeic acid to ferulic acid and of 5-hydroxyferulic acid to sinapic acid. The resulting products may subsequently be converted to the corresponding alcohols that are incorporated into lignins. The protein is Caffeic acid 3-O-methyltransferase (COMT1) of Catharanthus roseus (Madagascar periwinkle).